The following is a 1079-amino-acid chain: Error-prone DNA polymerase (1079 aa).

Belongs to the DNA polymerase type-C family. DnaE2 subfamily.

The protein localises to the cytoplasm. The catalysed reaction is DNA(n) + a 2'-deoxyribonucleoside 5'-triphosphate = DNA(n+1) + diphosphate. DNA polymerase involved in damage-induced mutagenesis and translesion synthesis (TLS). It is not the major replicative DNA polymerase. This Ralstonia pickettii (strain 12J) protein is Error-prone DNA polymerase.